Reading from the N-terminus, the 1381-residue chain is Peroxisomal ATPase PEX6 (1381 aa).

Over residues 1–10 the composition is skewed to polar residues; that stretch reads MTAPNSTPAS. 4 disordered regions span residues 1-23, 247-315, 333-374, and 467-499; these read MTAP…QDKP, VRTS…DNLS, TVTG…DRPR, and YSSR…NPPA. Positions 11–20 are enriched in basic residues; that stretch reads SRKRVRRRRQ. Composition is skewed to acidic residues over residues 270–284 and 296–315; these read AEDD…AEED and TDAD…DNLS. Composition is skewed to polar residues over residues 333–345, 355–367, and 487–499; these read TVTG…TGTP, GPGS…TATT, and FFEA…NPPA. 1031-1038 contacts ATP; the sequence is GPPGTGKT. Basic and acidic residues-rich tracts occupy residues 1294-1305 and 1337-1350; these read GAKDKDKKKEGA and STKK…KAAD. Residues 1294 to 1381 are disordered; the sequence is GAKDKDKKKE…GGDEDEGLYD (88 aa). Residues 1372–1381 are compositionally biased toward acidic residues; the sequence is GGDEDEGLYD.

It belongs to the AAA ATPase family. Interacts with PEX1; forming the PEX1-PEX6 AAA ATPase complex, which is composed of a heterohexamer formed by a trimer of PEX1-PEX6 dimers.

The protein resides in the cytoplasm. It is found in the cytosol. It localises to the peroxisome membrane. It carries out the reaction ATP + H2O = ADP + phosphate + H(+). Component of the PEX1-PEX6 AAA ATPase complex, a protein dislocase complex that mediates the ATP-dependent extraction of the PEX5 receptor from peroxisomal membranes, an essential step for PEX5 recycling. Specifically recognizes PEX5 monoubiquitinated at 'Cys-6', and pulls it out of the peroxisome lumen through the PEX2-PEX10-PEX12 retrotranslocation channel. Extraction by the PEX1-PEX6 AAA ATPase complex is accompanied by unfolding of the TPR repeats and release of bound cargo from PEX5. The polypeptide is Peroxisomal ATPase PEX6 (pex-6) (Neurospora crassa (strain ATCC 24698 / 74-OR23-1A / CBS 708.71 / DSM 1257 / FGSC 987)).